Here is a 972-residue protein sequence, read N- to C-terminus: Leucine--tRNA ligase (972 aa).

The short motif at Pro78–His89 is the 'HIGH' region element. A 'KMSKS' region motif is present at residues Lys741–Ser745. Lys744 lines the ATP pocket.

Belongs to the class-I aminoacyl-tRNA synthetase family.

It localises to the cytoplasm. It catalyses the reaction tRNA(Leu) + L-leucine + ATP = L-leucyl-tRNA(Leu) + AMP + diphosphate. This is Leucine--tRNA ligase from Mycobacterium leprae (strain Br4923).